Reading from the N-terminus, the 193-residue chain is Potassium-transporting ATPase KdpC subunit (193 aa).

The chain crosses the membrane as a helical span at residues proline 7 to methionine 27.

It belongs to the KdpC family. As to quaternary structure, the system is composed of three essential subunits: KdpA, KdpB and KdpC.

Its subcellular location is the cell inner membrane. In terms of biological role, part of the high-affinity ATP-driven potassium transport (or Kdp) system, which catalyzes the hydrolysis of ATP coupled with the electrogenic transport of potassium into the cytoplasm. This subunit acts as a catalytic chaperone that increases the ATP-binding affinity of the ATP-hydrolyzing subunit KdpB by the formation of a transient KdpB/KdpC/ATP ternary complex. This chain is Potassium-transporting ATPase KdpC subunit, found in Burkholderia orbicola (strain MC0-3).